The following is a 446-amino-acid chain: MPGVAVKLYSVFFKLLLKHRLQNLISISAADGLSDSFGVSTRSDESVAAANPSFTDGVATKDIHIDPMTSLTVRIFLPESALSPEPDSLRHKDNYNHQPRSDRRHSYGPNHNSPAPAERNESRRNSYGCNNENLEPYGGYAPSAKRNSRKLPVMLQFHGGGWVSGSSDSAANDFFCRRIAKVCDVIVLAVGYRLAPENRYPAAFEDGVKVLHWLGKQANLADCCKSLGNRRVNGVEVKKLNVQGQIVDAFGASMVEPWLAAHADPSRCVLLGVSCGGNIADYVARKAVEAGKLLEPVKVVAQVLMYPFFIGNNPTQSEIKLANSYFYDKPVSVLAWKLFLPEKEFDFDHPAANPLAHNRSGPPLKLMPPTLTVVAEHDWMRDRAIAYSEELRKVNVDSPVLEYKDAVHEFATLDMLLKTPQAQACAEDIAIWVKKYISLRGHEFSY.

The segment at 84 to 131 (PEPDSLRHKDNYNHQPRSDRRHSYGPNHNSPAPAERNESRRNSYGCNN) is disordered. Residues 87–105 (DSLRHKDNYNHQPRSDRRH) show a composition bias toward basic and acidic residues. The Involved in the stabilization of the negatively charged intermediate by the formation of the oxyanion hole motif lies at 158–160 (HGG). Residues S274, D378, and H408 contribute to the active site.

Belongs to the 'GDXG' lipolytic enzyme family. In terms of tissue distribution, expressed in roots, leaves, stems, flowers and siliques.

It carries out the reaction a carboxylic ester + H2O = an alcohol + a carboxylate + H(+). Carboxylesterase acting on esters with varying acyl chain length. In Arabidopsis thaliana (Mouse-ear cress), this protein is Probable carboxylesterase 16 (CXE16).